The chain runs to 643 residues: Transducer protein Htr8 (643 aa).

5 consecutive transmembrane segments (helical) span residues 48-68 (VFVLAHIPLLLALGLYEGTES), 79-99 (PGILIAAELGIVGALVGLASI), 115-134 (VLASSVVLVQFSGGFIEAHF), 149-169 (WLPFALGLVYVVFTHGVFGMI), and 184-204 (PWVWGGIHGAFVLLLAGALMA). Positions 273-326 (ERLEATANTYGAAMARAADGDLSVRLDPDVENDAMAAIAASFNEMLDETETTIR) constitute an HAMP domain. A Methyl-accepting transducer domain is found at 345-581 (GVVEIEDASG…EAVSMIAEVS (237 aa)).

The protein belongs to the methyl-accepting chemotaxis (MCP) protein family. In terms of processing, methylated by CheR.

It is found in the cell membrane. In terms of biological role, potentially involved in chemo- or phototactic signal transduction. The polypeptide is Transducer protein Htr8 (htr8) (Halobacterium salinarum (strain ATCC 29341 / DSM 671 / R1)).